We begin with the raw amino-acid sequence, 320 residues long: Putative FBD-associated F-box protein At3g60710 (320 aa).

Residues 2–48 form the F-box domain; sequence EDLISQLPNELLQEILLNLPTSESVRTSVLPTRWRNLWQSVPGLYLI. The FBD domain maps to 212 to 268; it reads MEEIASSPVPKCLQTSIENVKIKMTPKADQEKSRKAETEVANYILENATLLKLTLWL.

The polypeptide is Putative FBD-associated F-box protein At3g60710 (Arabidopsis thaliana (Mouse-ear cress)).